The following is a 208-amino-acid chain: ATP-dependent Clp protease proteolytic subunit (208 aa).

The Nucleophile role is filled by Ser-107. His-132 is an active-site residue.

This sequence belongs to the peptidase S14 family. In terms of assembly, fourteen ClpP subunits assemble into 2 heptameric rings which stack back to back to give a disk-like structure with a central cavity, resembling the structure of eukaryotic proteasomes.

Its subcellular location is the cytoplasm. The enzyme catalyses Hydrolysis of proteins to small peptides in the presence of ATP and magnesium. alpha-casein is the usual test substrate. In the absence of ATP, only oligopeptides shorter than five residues are hydrolyzed (such as succinyl-Leu-Tyr-|-NHMec, and Leu-Tyr-Leu-|-Tyr-Trp, in which cleavage of the -Tyr-|-Leu- and -Tyr-|-Trp bonds also occurs).. Its function is as follows. Cleaves peptides in various proteins in a process that requires ATP hydrolysis. Has a chymotrypsin-like activity. Plays a major role in the degradation of misfolded proteins. This Methylorubrum extorquens (strain CM4 / NCIMB 13688) (Methylobacterium extorquens) protein is ATP-dependent Clp protease proteolytic subunit.